A 293-amino-acid polypeptide reads, in one-letter code: DOMON domain-containing protein FRRS1L (293 aa).

The first 28 residues, 1 to 28, serve as a signal peptide directing secretion; that stretch reads MARPPRQHPGVWASLLLLLLTGPAACAA. The tract at residues 29–61 is disordered; that stretch reads SPADDGAGPGGRGPRGRARGDTGADEAVPRHDS. Residues 46–61 are compositionally biased toward basic and acidic residues; sequence ARGDTGADEAVPRHDS. The region spanning 119 to 234 is the DOMON domain; that stretch reads CDYFLSYRMI…WYYLFAWGPA (116 aa). A helical membrane pass occupies residues 271–291; sequence TFSSPFCLLLIVALTFYLLMG.

As to quaternary structure, component of the outer core of AMPAR complex. AMPAR complex consists of an inner core made of 4 pore-forming GluA/GRIA proteins (GRIA1, GRIA2, GRIA3 and GRIA4) and 4 major auxiliary subunits arranged in a twofold symmetry. One of the two pairs of distinct binding sites is occupied either by CNIH2, CNIH3 or CACNG2, CACNG3. The other harbors CACNG2, CACNG3, CACNG4, CACNG8 or GSG1L. This inner core of AMPAR complex is complemented by outer core constituents binding directly to the GluA/GRIA proteins at sites distinct from the interaction sites of the inner core constituents. Outer core constituents include at least PRRT1, PRRT2, CKAMP44/SHISA9, FRRS1L and NRN1. The proteins of the inner and outer core serve as a platform for other, more peripherally associated AMPAR constituents. Alone or in combination, these auxiliary subunits control the gating and pharmacology of the AMPAR complex and profoundly impact their biogenesis and protein processing. In terms of tissue distribution, expressed in adult and fetal brain. Very weak expression in medulla, spinal cord and in adult ovary.

It is found in the cell membrane. The protein resides in the synapse. In terms of biological role, important modulator of glutamate signaling pathway. The polypeptide is DOMON domain-containing protein FRRS1L (FRRS1L) (Homo sapiens (Human)).